A 190-amino-acid polypeptide reads, in one-letter code: Dynein axonemal light chain 1 (190 aa).

At Ala-2 the chain carries N-acetylalanine. LRR repeat units follow at residues Asn-49–Lys-70, Asn-71–Gly-92, Thr-94–Lys-115, and Lys-116–Ala-137. The residue at position 56 (Ser-56) is a Phosphoserine. The LRRCT domain maps to Asn-150–Asn-190.

The protein belongs to the dynein light chain LC1-type family. Interacts with ZMYND10 (via C-terminus). Interacts with DNAH5, a outer arm dynein heavy chain. Interacts with tubulin located within the A-tubule of the outer doublets in a ATP-independent manner.

The protein localises to the cytoplasm. It is found in the cytoskeleton. Its subcellular location is the cilium axoneme. In terms of biological role, part of the multisubunit axonemal ATPase complexes that generate the force for cilia motility and govern beat frequency. Component of the outer arm dynein (ODA). May be involved in a mechanosensory feedback mechanism controlling ODA activity based on external conformational cues by tethering the outer arm dynein heavy chain (DNAH5) to the microtubule within the axoneme. Important for ciliary function in the airways and for the function of the cilia that produce the nodal flow essential for the determination of the left-right asymmetry. The protein is Dynein axonemal light chain 1 (DNAL1) of Bos taurus (Bovine).